Consider the following 250-residue polypeptide: Glutamate racemase (250 aa).

Substrate-binding positions include 7 to 8 and 39 to 40; these read DS and YG. Cysteine 70 (proton donor/acceptor) is an active-site residue. 71 to 72 is a binding site for substrate; it reads NT. Residue cysteine 180 is the Proton donor/acceptor of the active site. 181 to 182 provides a ligand contact to substrate; that stretch reads TH.

It belongs to the aspartate/glutamate racemases family.

It catalyses the reaction L-glutamate = D-glutamate. It functions in the pathway cell wall biogenesis; peptidoglycan biosynthesis. Provides the (R)-glutamate required for cell wall biosynthesis. The protein is Glutamate racemase of Campylobacter jejuni subsp. jejuni serotype O:2 (strain ATCC 700819 / NCTC 11168).